Consider the following 218-residue polypeptide: Large ribosomal subunit protein uL3 (218 aa).

The interval 127–167 (GFSRGPMSHGSKNHREPGSTGAGTTPGRIYPGKRMAGRYGG) is disordered.

Belongs to the universal ribosomal protein uL3 family. Part of the 50S ribosomal subunit. Forms a cluster with proteins L14 and L19.

In terms of biological role, one of the primary rRNA binding proteins, it binds directly near the 3'-end of the 23S rRNA, where it nucleates assembly of the 50S subunit. The chain is Large ribosomal subunit protein uL3 from Prochlorococcus marinus (strain MIT 9303).